The primary structure comprises 78 residues: Large ribosomal subunit protein bL28 (78 aa).

Residues 1-25 are disordered; that stretch reads MARVCQVTGKRPMSGHHVSHANNKT. Basic residues predominate over residues 13–25; the sequence is MSGHHVSHANNKT.

It belongs to the bacterial ribosomal protein bL28 family.

In Nitrosomonas eutropha (strain DSM 101675 / C91 / Nm57), this protein is Large ribosomal subunit protein bL28.